The chain runs to 619 residues: 1-deoxy-D-xylulose-5-phosphate synthase (619 aa).

Thiamine diphosphate-binding positions include His80 and 121–123; that span reads GHS. Residue Asp152 coordinates Mg(2+). Thiamine diphosphate contacts are provided by residues 153-154, Asn181, Tyr288, and Glu370; that span reads GA. Mg(2+) is bound at residue Asn181.

This sequence belongs to the transketolase family. DXPS subfamily. As to quaternary structure, homodimer. Requires Mg(2+) as cofactor. The cofactor is thiamine diphosphate.

It catalyses the reaction D-glyceraldehyde 3-phosphate + pyruvate + H(+) = 1-deoxy-D-xylulose 5-phosphate + CO2. It participates in metabolic intermediate biosynthesis; 1-deoxy-D-xylulose 5-phosphate biosynthesis; 1-deoxy-D-xylulose 5-phosphate from D-glyceraldehyde 3-phosphate and pyruvate: step 1/1. Functionally, catalyzes the acyloin condensation reaction between C atoms 2 and 3 of pyruvate and glyceraldehyde 3-phosphate to yield 1-deoxy-D-xylulose-5-phosphate (DXP). In Yersinia pseudotuberculosis serotype I (strain IP32953), this protein is 1-deoxy-D-xylulose-5-phosphate synthase.